Consider the following 7311-residue polypeptide: NQPAYCDFEKDNWCTWTNSDKEDDFDWLLGSGSTPSVYTGPSNDHTTGLGIGKYMFIETSSPRKSGDKARFYSERLSPTSLRGRCVKFWYHMYGSSIGTLKVFVKTGAGNRSESLVWSLSGNQRNRWNFGQVTIASYRSAYQIVFEGIRGNSYRGDIAIDDITYTVGSCVTLPRGAVPTTPPTTVRPTTSPTVPPKGALDCDFERGFCSWVQDSSDKFNWTRQSRGTASSNTGPSADHTLKNATGYYAYIEASFPRRANDTARLISPLIPANSRPGMCISFWYHMYGPHIDTLNVYTKVGSSLGSAIWKKTGNQGNKWRYGQVFVRMVLNFQIVFEGVRGRSYQGDIAIDDVTVRNGFCSPLKQCTFEDAGMCGWRNEKSAGVDDFDWTRQSGATSSSGTGPTFDHTLGTARGFYMYIETSFPRKQGDKAQLLSPSYPSTSGKCLRFWYHMYGNHIGTLNIRIKQMVLGRPTYFLQWSRSGDHGNNWRVAQVTIRSGSQFQVVFEGIRGSGYQGDIAIDDVELKDNVCPPPGDCNFETGTCNWVNVQNTDNFDWLRGRGSTPSSFTGPSVDHTTNSSSGYYMFIETSSPRRIGDKARFESEEFQPTGSSGRCLKFWYHMYGSSVRGLNVWMSSNGSTGQIWTLSGNQRQDKWFYAQAPVRSANVYQVIFEGVRGLSYAGDIAIDDVQFIVGNCPVLPSKAKPLNPWTPRPVPTVAPTNSTTPAPSIYDCTFEQSMCTWTQALDDSFNWTRTKGRTPSRFTGPVSDHTTGGSAGYYVYIETSSPRKANETARIESVTIPATQQKCLQFWYHMYGPHVDTLNVYTKINNQLGVPVWTLNGTQGNKWRHAVVSLTVSSKFKVVFEGRRGVSWAGDIALDDISFQDGQCPVQMQCSFENPNLCGWSNVQGDNFDWTRSNGYTSSSGTGPSVDHTSGTSNGYYMYIETSSPRSRGHKAWFVSSPFKATNGRCLQFWYHMYGATIGALNVLLLQNRTRSAPIWNLSGNQGNLWRMAQVTLKSPTDFKVIFEGVTGTSYTGDIAIDDVEIMDGACPLPGDCTFEKGTCTWVNSLNVVDDEFDWTRGSGGTPSSFTGPSTDHTTGTKNGNYMFIETSFPRKRGDRARLESEVFPPTTSTGRCMSFWYHMMGGHIGTLNVYMKIYGQSETKLWSMTLDQGNNWNSARVPIVSGNRYYQIILEGVRGSSYQGDIAIDDISFVATARRCRLSPSNAVPFDCNFELGTCSWTQSFRDQFHWTRHQGSTGSFLTGPSIDHTTATNKGWYIYIETSGPRRPNDTARIVSPTIAGNGTVKVIRCVSFWYHMYGPHVDELRLYKKEGFSLGKPQWVRQGDQGNKWIKGEYTVEHTNGIQIVFEGVRGVSYRGDIALDDISLKDGSCPSSGMCSFEAPDICGYTQDHDTDQFDWSRSNGPTASFSTGPAADHTYGTLFGHFMYTEVSPSSITQGSKARLLSPRYPATRGSCLQFWYHMYGQTIGTLNVYTRRSSWSLNKVWSKTGNDTNIWNVAQVTIRSPFAYQIVFEGVKGRSYTGDIAIDDVKIMSGSCPAPGDCSFEKGFCTWANTRQVDTFDWIIGGGTTSSFGTGPSGDHTTGSGQYVFIETSAPRQHGDNAYLLSQPFDPAPSGRCLKFWHHMRGASIGTLNVYLHTGNFSAMQLLWQRNGNKGSTWMIGQTPITSSVKYQVVFEGIRGNSFTGDIALDDISFTVGAANCIQRPYDSLPPGVTTSAPTLSTSSSVAPTTIGNIGNDCNFDVGICKWTFASYGQFNWTRHQGSTASSGTGPKYDHTRGNSGQGYYMYIETSVPRRPNDTAGLVSPKVQKVGSFACVIFWYHMFGPHINQLNVYFKDGSKAKTLMWQKIGSQADEWRQGLLQLSPSQGSYQVIFEGVRGTSYQGDISLDDISFQNNKCPSSTDCTFEYFLGSISNTCGWTQDGSDDFDWTRTSGGTPSHATGPSADHTYGTSQGYYMHIETSYPRRRGDKARLISPVYRPVRGGQCFQFWYHMYGSDIDRLNVYIKTGSNISIPVWSRSGNRGDLWKISQVPVTTTVNFNIVIEGIAGRSFRGDIAIDDLKLIKSPCPLPGDCDFESGMCTYDNTQAEDQFDWLRNAGATPSWRTGPSVDHTLGTGFGHYMYIETSSPRRQGDKARLMSEDFNPTTSSGRCVRFWYHLYGNAIGTLRVLVKTGPGNQSETAIWELSGNFGNQWYSAQAPVSSAKVYQVVFEGVRGRGVSGDIAIDDITFATTRCSVVPSLAVPPTPPPTTPPPVINNCTFEGGFCSWKNLRGDNFDWTRSRGATSSWRTGPTTDHTLGTRAGYYVYIETSFPRRSKDKAWLQSGLIQPTTVTNGRCLKFWYHMWGTHVDTLNVYRKVGSSPNVRIWFRRGTQGNKWRFAQVNLLSNQPFYVIFEGVRGLSYQGDIALDDLDIADGPCPPLTVCDFETDMCKWTNIAIGDQFDWKRDSGGTPSAGTGPSRDHTTGTRNGMYMYIETSLPRRQGDKAYFISPRYDAAPNGKCFKFWYHMYGRHIGKLNIYVKAGPALGAMVWNETGNQGNFWLHGKAPVKISTQFQIVIEGIRGASYAGDIALDDFSLDDSPCPPEGSCDFEEKSFCSWLNVPNGNKSLGLDDFDWTLGSGSTPSWQTGPSTDHTTGSSLGTYAFIETSNPRRAGHIARIRSKTFSATNGKCMSWWFHMYGRSVGSLNVYIKKGGSPESLLWNTKGNQGNVWKKTEVTITSKSDFQIIFEGVSGAGFQGDIAIDDIDFADKYCVGLCSSVNPQQRVDCSGGLGISKTTCVNLRRCCWDDSVPNVPVCFYHPSACASVIPANRRTCGFSGISSSQCRTRGCCWDNSLSNVPWCFHGPARPTDFPTQPPPPTTLPPSKWDCTFESGFCNWNNSQEDDFNWSRQSGGSPSIGTGPTSDHTTGSLRGYYVYIETSYGSANDTAVLESAMVPATIRKPSGMICLQFWYHMRGQHVDTLNVFVKPGNQLPSSPTWTKSGTQGTQWRLGQVAVSSRAPFQFVFQGIRGKGYQGDIALDDIRVLDGTCPPSRECDFESPNLCNFTQDTGDIFDWSRGSGNTISVGTGPSYDHTYKTASGYYMYIETSAPRRTGDYARIESISYDQTVGNGRCLVFWHHMYGGGIGRLNVYIKRGNSLGTPVWRKNGNHGNKWWRGMVTVRSPNQKWKVVFEGIRGRGGRGDIAIDDIIVKDQPCPPPGSCDFESGWCAYQNDLTGDDFDWERNTGHTSSIGTGPSVDHTTGSPQGHYVYIESSYPRTKGDVARLTSDLFEVSKGYAWCLSFWYHMYGNSVGSLSVKITIYPFRKDKPYTRLLWTQQLNHGDVWLTDTVQINSPDDFEIVFEAVVGSSYDADIAIDDIVVTAGFCPSPKPTVAPNPCAVRCKSNNKCVSSTQLCDFVNDCGRGDNSDEKNCGACTFEQDLCGWNDTSKGAFKWNKDRGGTPSSNTGPTIDHTLGTALGYYMYVEASQGRIRDMAQLESPWLKQSASTCVVSFWYHMYGRGIGRLYGYIKVGLTYTRLFQQSGNKGNNWLQGKLYVGRRFAPFKIIFEAERSYNVFGDVAVDDVSFVNCTLPPIVSSCGQQHRCIRGSCIDRGRVCDYTDDCGDNSDEQNCYNFKYRCSFEKSLCQWTQLKDEEFDWTRNQGVTASYNTGPMFDHTLGTAAGYYLYAEASYPRKKGDKARLASGFITTPGDDSCKLRLYFHMFGSGIGSLNVYTRPCNGCAETLVYTRSGNLGNFWERAEVALMSRVPFQVIIESVRGVSYLGDIAIDDLSMTSSCQSYRGPLPTAPPPTTAIPTPPPCPRFQFKCSNGLCIDTWNVCNYRDDCGDGSDEVNCGSCSFEPGLCGYQDVSLTLYQWSRNRGTTVVPRTGPSVDHTCGNASCFYAYVHSGAGSFFDDAILQSRNMTKTGPGCVVSFYYHMYSRLSAGFTGTLYLRLKYKGTTSNLFEVYGNNGDKWKRAEVGLGSLDAGFSIQFVASKFVTAADIAVDDVTFQGCALPPIRSCISGEYRCTRGSCVLPSQLCDFSDDCGDMSDENPSTCASYKERCNFEQDLCSWTQDTDDDFDWTKDSGGTPSSWTGPGRDHTKGSSKGFYMYIETSSPRKSNESARMSSMTFRPSSRNDSCYMRFWYHMFGKDVDTLSIKLRISMIGPLIPLWNRTGEQGDMWRRAEIHLASNVNFQVVIEGLSGPGFQGDIAIDDVSFTPNCRPDSTASISTTIPTGPPIPGCQPGKFKCANGGNCISVSKVCNFYSDCSGGSDEMNCPATCNFQNSFCKWQNAKSVDHYDWVRNKGQTPSRFTGPSVDHTTNSSAGYYIYTEVSNRTGFFADAHLVSPLFRQAGKNCQFKFWYHMFGPNIGFLQVFYRRNSRDQQLFSVFGNKGNKWNQGTVDIPKCANDFRIVIMAKHYSGGALGDIAVDDVSFEHCAESPPSQTCSGLSVFRCQSGHCIAMSGKCDFEPDCCDGSEETNIVCAKYNRCNFEAGLCDWTQLANDTFNWRMQSGRTGSHRTGPSLDHTTRSRNGRYMYIEASSPRKPGDSAILGSAVFKPTGSCKLRFFYHMYGSHIGHLNVSIRTSTNGPSTVLWTKSGDQGDKWTRATVSISVSKNFQVLIEGVVGSSYRGDIAIDDISFTPDCVVGGTIPGLPPPPPTPTQPSCFNCRDGSACVNISKTCDFHNDCTDKSDEDADLCGWPCDFQRGTCSWTNSNRDNFDWTRHKGCTASVSTGPCVDADNRTSGYYMYIETSTGLIGNKAVLVSPRYQQAYSTAQLSFWYHMYGRTIGRLSVYLNDGINRTRMWTLYGNQGDQWYQTFISLGRRRTPFTIEFEALRGSSWSGDIAIDSISMNNYTLTYCSGQLPPTKWRCRNGACVDANALCDFSDDCGDNSDEQSCSNYFSRCTFENGLCDWFQGSGDEIDWIRNKGPTPSFSTGPSRDHTLGTVEGYYLYMEATGQKFGDRARLASNNLMGKCNLRMFYHMHGIHVNSLAVYMRTKLNGPLRVVANMSGSVGDNWIRSEVNVTNGDQPFQIVIEGVRGRGYRGDIAIDDLSIAMKPSCQQFFGSLPWLGSTVKPITTVAPNNCVLPQVPCVSDGKCVSPSQVCDFNLDCADASDERSCPHMCTFESDQCGWVNTVKDNFDWSRKRGRTPSFGTGPSVDHTTGTNQGYYMYIETSYGRIGDRARLISPQFKKSHSNCKMVFWYHMYGSSIGSLSVYLNVSSNTKLWWRKYGYQGNQWYRGVVGIGKRSNAFQIIFLGIRGRSYSGDIAIDDIKFVDCALPPVARSCPSQFTCARNSCVSNDYVCDFNDDCGDGSDETLCGAYTTRCDFSRGSCDWTQSNEDDFNWLRRKGATSSFNTGPPSDHTSQTGYYMYIETSWPRRYGDKAWLVSRNFQEMTPGSESCKLRFFYHMFGDSAESLNVYIRTYRNGSALQRVWGVKGSRGAIWNRAVITLSSRKNFQVLIEGIRGDSYTGDIGIDDVSFTTGCKQFSGNLPVAPPISPTSNPATTKPHQCTTAEFNCFNQGSGACIPSTQVCNFQPNCNDGVDEQNCAKTKCSFDGGDFCNWYVNNPSRTRRALAYTWLAQQGATGSSGTGPTKDHTTGTLSGWYIYAESSGGSNDDRAPLTTPLIGQTGPECTLLFWYHMFGVSVGTLSVKLSFLDGTQSVMWSKSGSQGNRWRQSKLMIGSRQLFKVTFEARRSYGYKGDIALDDIEFLNCVPLDLTKKCTADEFQCARGGCIPKTSVCDFKADCMVGDVSDESSCSAYRSGQCDFEHGLCLYSQSSDDKFDWTVKTGGTFSYNTGPTIDHTTKSKKGHYMYIETSWPRRNGDNARLNSPILKSTSSNCYLRFFYHMKGNHIGNLSVFSRTGYSVGDLSGPLLNITGAQGDFWNRSMVKAPVSSNDFQFVIEGVRGNGYQGDIAIDDVSLTPGCQICTDCTLPGQPTSTPFGFHTRPTGTPCSLQQYVCKNLRCVDKAQICNFKDDCGDNSDELPCGSNCTFEGDCYRGWRQSTGSSNFHWRRRNGKTPSVGTGPTNDHTFGNQNGYYMYIETSNGSPGDKAELASYRYFASSPNCRMSLWYHMFGTGVGSLEVKLKKSDGTYEILGNALTGSQGNAWKKYTLNIGANKNFEILIVAARGINWQGDIAIDDISFTDNCFVDLNRTCTPNEVKCRTSGHCVAEQRVCDHVKDCNDGTDEDALICSNRTASCDFDVNWCQWDNYWVDDFNWLRASAIGTPNTGPRADHTTGKGYFLYIDSSKPRQLFDKARLVHPNVFPSGRGVCTLRFYYNMYGSQNMGYLNVYLVYSGYSQWTQVWRTRGDPANRLWVRAEIQLNSQSSFRVGFEGIVGGGDKTDIALDDISFSAGCYKGGSPPLPTGSARCSKVQFYCKADDLCINIHWKCDGEKDCTDGADEMLCPSPTKQPTPPPGLTHPANCNFESGFCLWRSAFFADMNWLRNRGQTPSRQTGPDGDHTTGTGYYVYAEATGHYMNQFGELLGPNMMPSSTCKVYFCYLMHGKDMGTLNVYQRFPSDKKPDQTQKRKWSQSLDFGKKWRCVYVPLPSTRQFSVVFEAIRGKGYRSDIALDDIKFVNCAKLGPTQKPTPAPRGTILDEDFEDCISCWMNEKNGHDQMDWVIGRGETSSLNTGPSYDHTRKTIYGRYLYIDVYSASHIQGWVHADLESRLMVVQRRCYMTFWYHMYGAGMGSLWIVAYVYDDPKNLNDWREVSLWYSYGNQGNKWTSGKVNLFNHLTASKTSRVVISGIRGSDYTGDIAIDDIKFHNCDFKDDKTPCGEVFDRCNDRPIPKPTLGPASGDCTFESGLCHWNNTIVNDMPWFLRKGKTGSQYTGPAVDHTLGTPDGYYVHIEASWYTRGSVAILEGPYTLPTQNCEMKFYYHMFGGDCGSLLVYINSGDSVKLVFNKTGEQGKDWLGASVQLKSDYAFRIHITATRGSSYKGDIAIDDISFKGQCQFTSNAALRYGDKLLTTGCADGGREGFFSHPSVAGCKGRWSRPESLRAKPTSGAKCGDDIGLWGRSCSQPAELCATGWHICGSYGVREIVNRTNGIDCQEAGYGKFSAGINHCMQNNAGGDGCKRVVTDIDYGCGKYYDSCSEPLCCGSNCQGPDICDSGVFRAATRYSASSEHLEGCSFISSDNAGGIMCCKDDATTPTPAPTMPPVPGSCNFETGLCGWIVDSSTALSFGLGQGETVTRNTGPRYDNTKKDMTGTYLSMPAVNGKPNDIARVSHHFSNVTQSYCQINFFYHMYGAGMGSLRVFVELDGGGKKKVWEKTGNQGDGWLRGAQNFSGADQEDDCIYNNL.

MAM domains follow at residues 4–171 (AYCD…SCVT), 199–361 (LDCD…FCSP), 363–530 (KQCT…VCPP), 532–695 (GDCN…NCPV), 727–887 (YDCT…QCPV), 889–1050 (MQCS…ACPL), 1052–1220 (GDCT…RCRL), 1228–1392 (FDCN…SCPS), 1394–1557 (GMCS…SCPA), 1559–1722 (GDCS…NCIQ), 1755–1918 (NDCN…KCPS), 1920–2087 (TDCT…PCPL), 2089–2254 (GDCD…RCSV), 2274–2437 (NNCT…PCPP), 2439–2601 (TVCD…PCPP), and 2603–2771 (GSCD…YCVG). The segment at 2461–2481 (WKRDSGGTPSAGTGPSRDHTT) is disordered. Residues 2466–2475 (GGTPSAGTGP) are compositionally biased toward low complexity. 2 consecutive P-type domains span residues 2771 to 2817 (GLCS…FYHP) and 2818 to 2862 (SACA…FHGP). Intrachain disulfides connect Cys2773–Cys2802, Cys2784–Cys2801, Cys2795–Cys2813, Cys2820–Cys2847, Cys2831–Cys2846, and Cys2841–Cys2858. 4 MAM domains span residues 2883–3048 (WDCT…TCPP), 3050–3214 (RECD…PCPP), 3216–3384 (GSCD…FCPS), and 3429–3587 (GACT…NCTL). The region spanning 3593 to 3628 (SCGQQHRCIRGSCIDRGRVCDYTDDCGDNSDEQNCY) is the LDL-receptor class A 1 domain. Disulfide bonds link Cys3594-Cys3605, Cys3600-Cys3618, and Cys3612-Cys3627. The region spanning 3632 to 3794 (YRCSFEKSLC…DLSMTSSCQS (163 aa)) is the MAM 21 domain. LDL-receptor class A domains follow at residues 3814-3850 (PCPR…VNCG) and 4016-4054 (SCIS…STCA). 3 disulfides stabilise this stretch: Cys3815–Cys3827, Cys3822–Cys3840, and Cys3834–Cys3849. The MAM 22 domain maps to 3850-4011 (GSCSFEPGLC…DDVTFQGCAL (162 aa)). 3 disulfide bridges follow: Cys4017-Cys4029, Cys4024-Cys4042, and Cys4036-Cys4053. The region spanning 4058–4221 (ERCNFEQDLC…DVSFTPNCRP (164 aa)) is the MAM 23 domain. The region spanning 4239 to 4276 (GCQPGKFKCANGGNCISVSKVCNFYSDCSGGSDEMNCP) is the LDL-receptor class A 4 domain. 3 disulfide bridges follow: Cys4240-Cys4253, Cys4247-Cys4266, and Cys4260-Cys4275. The MAM 24 domain occupies 4277 to 4438 (ATCNFQNSFC…DDVSFEHCAE (162 aa)). Residues 4444 to 4483 (TCSGLSVFRCQSGHCIAMSGKCDFEPDCCDGSEETNIVCA) enclose the LDL-receptor class A 5 domain. Cystine bridges form between Cys4445-Cys4458, Cys4453-Cys4471, and Cys4465-Cys4482. The MAM 25 domain maps to 4486–4646 (NRCNFEAGLC…DISFTPDCVV (161 aa)). LDL-receptor class A domains lie at 4660–4699 (PTQP…DLCG) and 4859–4899 (YCSG…QSCS). Cystine bridges form between Cys4668/Cys4687, Cys4681/Cys4698, Cys4860/Cys4876, Cys4871/Cys4889, and Cys4883/Cys4898. Residues 4700 to 4862 (WPCDFQRGTC…NNYTLTYCSG (163 aa)) enclose the MAM 26 domain. An MAM 27 domain is found at 4903-5063 (SRCTFENGLC…SIAMKPSCQQ (161 aa)). The LDL-receptor class A 8 domain occupies 5085-5122 (NCVLPQVPCVSDGKCVSPSQVCDFNLDCADASDERSCP). 3 cysteine pairs are disulfide-bonded: Cys5086-Cys5099, Cys5093-Cys5112, and Cys5106-Cys5121. The region spanning 5123-5281 (HMCTFESDQC…DDIKFVDCAL (159 aa)) is the MAM 28 domain. Positions 5287 to 5322 (SCPSQFTCARNSCVSNDYVCDFNDDCGDGSDETLCG) constitute an LDL-receptor class A 9 domain. 3 cysteine pairs are disulfide-bonded: Cys5288-Cys5299, Cys5294-Cys5312, and Cys5306-Cys5321. An MAM 29 domain is found at 5326–5489 (TRCDFSRGSC…DVSFTTGCKQ (164 aa)). Positions 5513–5552 (QCTTAEFNCFNQGSGACIPSTQVCNFQPNCNDGVDEQNCA) constitute an LDL-receptor class A 10 domain. Cystine bridges form between Cys5514/Cys5529, Cys5521/Cys5542, and Cys5536/Cys5551. In terms of domain architecture, MAM 30 spans 5554–5719 (TKCSFDGGDF…DDIEFLNCVP (166 aa)). One can recognise an LDL-receptor class A 11 domain in the interval 5725-5763 (KCTADEFQCARGGCIPKTSVCDFKADCMVGDVSDESSCS). 3 disulfide bridges follow: Cys5726/Cys5738, Cys5733/Cys5751, and Cys5745/Cys5762. The MAM 31 domain maps to 5768–5935 (GQCDFEHGLC…LTPGCQICTD (168 aa)). In terms of domain architecture, LDL-receptor class A 12 spans 5957-5993 (PCSLQQYVCKNLRCVDKAQICNFKDDCGDNSDELPCG). 3 cysteine pairs are disulfide-bonded: Cys5958/Cys5970, Cys5965/Cys5983, and Cys5977/Cys5992. The MAM 32 domain maps to 5994–6156 (SNCTFEGDCY…DISFTDNCFV (163 aa)). Residues 6014 to 6034 (NFHWRRRNGKTPSVGTGPTND) form a disordered region. The segment covering 6023-6034 (KTPSVGTGPTND) has biased composition (polar residues). The LDL-receptor class A 13 domain maps to 6161-6200 (TCTPNEVKCRTSGHCVAEQRVCDHVKDCNDGTDEDALICS). 3 disulfides stabilise this stretch: Cys6162-Cys6175, Cys6169-Cys6188, and Cys6182-Cys6199. One can recognise an MAM 33 domain in the interval 6204–6365 (ASCDFDVNWC…DISFSAGCYK (162 aa)). One can recognise an LDL-receptor class A 14 domain in the interval 6377–6414 (RCSKVQFYCKADDLCINIHWKCDGEKDCTDGADEMLCP). Intrachain disulfides connect Cys6378/Cys6391, Cys6385/Cys6404, and Cys6398/Cys6413. 4 MAM domains span residues 6430-6590 (ANCN…NCAK), 6606-6779 (LDED…NCDF), 6808-6965 (GDCT…QCQF), and 7173-7311 (GSCN…YNNL).

In terms of tissue distribution, component of the acid-insoluble and acid-soluble organic matrix of the aragonitic skeleton (at protein level).

Its subcellular location is the secreted. The protein is MAM and LDL-receptor class A domain-containing protein 2 of Acropora millepora (Staghorn coral).